Here is a 93-residue protein sequence, read N- to C-terminus: Pyrimidine/purine nucleoside phosphorylase (93 aa).

It belongs to the nucleoside phosphorylase PpnP family.

The catalysed reaction is a purine D-ribonucleoside + phosphate = a purine nucleobase + alpha-D-ribose 1-phosphate. The enzyme catalyses adenosine + phosphate = alpha-D-ribose 1-phosphate + adenine. It carries out the reaction cytidine + phosphate = cytosine + alpha-D-ribose 1-phosphate. It catalyses the reaction guanosine + phosphate = alpha-D-ribose 1-phosphate + guanine. The catalysed reaction is inosine + phosphate = alpha-D-ribose 1-phosphate + hypoxanthine. The enzyme catalyses thymidine + phosphate = 2-deoxy-alpha-D-ribose 1-phosphate + thymine. It carries out the reaction uridine + phosphate = alpha-D-ribose 1-phosphate + uracil. It catalyses the reaction xanthosine + phosphate = alpha-D-ribose 1-phosphate + xanthine. Catalyzes the phosphorolysis of diverse nucleosides, yielding D-ribose 1-phosphate and the respective free bases. Can use uridine, adenosine, guanosine, cytidine, thymidine, inosine and xanthosine as substrates. Also catalyzes the reverse reactions. The chain is Pyrimidine/purine nucleoside phosphorylase from Vibrio atlanticus (strain LGP32) (Vibrio splendidus (strain Mel32)).